The chain runs to 403 residues: Phosphopentomutase (403 aa).

Asp-13, Asp-298, His-303, Asp-339, His-340, and His-351 together coordinate Mn(2+).

It belongs to the phosphopentomutase family. Mn(2+) is required as a cofactor.

The protein localises to the cytoplasm. It carries out the reaction 2-deoxy-alpha-D-ribose 1-phosphate = 2-deoxy-D-ribose 5-phosphate. The enzyme catalyses alpha-D-ribose 1-phosphate = D-ribose 5-phosphate. It participates in carbohydrate degradation; 2-deoxy-D-ribose 1-phosphate degradation; D-glyceraldehyde 3-phosphate and acetaldehyde from 2-deoxy-alpha-D-ribose 1-phosphate: step 1/2. In terms of biological role, isomerase that catalyzes the conversion of deoxy-ribose 1-phosphate (dRib-1-P) and ribose 1-phosphate (Rib-1-P) to deoxy-ribose 5-phosphate (dRib-5-P) and ribose 5-phosphate (Rib-5-P), respectively. The polypeptide is Phosphopentomutase (Streptococcus thermophilus (strain ATCC BAA-491 / LMD-9)).